The sequence spans 506 residues: MSAIVGLCLLSEKVVLSRSLTDEVSKLYKLNRGNVKEPRKYATERMSTQSKPVALQVPVSTIVLDYKDEDFIKQNPTYSAMDIIGSPSNTAPQTAFQSIMPSLSALFNTPFIQGAFRHRIISSMGPEISYLVMVIGPPSGFMDTPNVSSAQSSVHTVSNADVDLNDIIAINSTMAKSTKLVSASTLQAMLVNDVYDRCMDLDGILLSQALPFFRNYVNVQSKGSLPPAVAACLNTPIKELFSMGSGKREPLTLEFRKDNEGQCLGIVLPKGHEGDTLSSRYPAVFINESEPFSDKERSELSELKRTDSDAYEKLYSETISKHVSDGSYGNRVIISHKMSRLSNGGVKIIGRFKISDFNTVKKNLSSRSGEVDSAKEQWEALSGNGLVTDSNISMLHDKILDTITSNKPGVVLRDGNKKSENIVVCFKNGFPNKKHSLLQLTKNGISVVSLDELTDAGILVESTGPDRVRRSPKALANKLSSFKGRKVTLDVDNMSTEALIQKLSAL.

RNA-binding stretches follow at residues 128–249 (ISYL…GKRE) and 325–355 (DGSYGNRVIISHKMSRLSNGGVKIIGRFKIS).

Belongs to the phytoreovirus protein P7 family.

The protein localises to the virion. Its subcellular location is the host cytoplasm. In terms of biological role, probable component of the transcriptional machinery present in the inner capsid. Displays dsRNA binding activity and may play an important role in the sorting of viral RNA and virion assembly. Together with the RNA-directed RNA polymerase P1 and capping enzyme P5, forms an transcriptional complex positioned near the channels situated at each of the five-fold vertices of the core. The polypeptide is Protein P7 (Alopecurus aequalis (Barnyard grass)).